Consider the following 246-residue polypeptide: 5'-nucleotidase SurE (246 aa).

Positions 8, 9, 39, and 91 each coordinate a divalent metal cation.

It belongs to the SurE nucleotidase family. It depends on a divalent metal cation as a cofactor.

It is found in the cytoplasm. The catalysed reaction is a ribonucleoside 5'-phosphate + H2O = a ribonucleoside + phosphate. Its function is as follows. Nucleotidase that shows phosphatase activity on nucleoside 5'-monophosphates. The protein is 5'-nucleotidase SurE of Actinobacillus succinogenes (strain ATCC 55618 / DSM 22257 / CCUG 43843 / 130Z).